A 428-amino-acid chain; its full sequence is Serine--tRNA ligase (428 aa).

231–233 is a binding site for L-serine; the sequence is TAE. ATP is bound at residue 262 to 264; that stretch reads RSE. Glutamate 285 provides a ligand contact to L-serine. 349–352 is an ATP binding site; sequence EISS. Position 385 (serine 385) interacts with L-serine.

This sequence belongs to the class-II aminoacyl-tRNA synthetase family. Type-1 seryl-tRNA synthetase subfamily. Homodimer. The tRNA molecule binds across the dimer.

The protein localises to the cytoplasm. It catalyses the reaction tRNA(Ser) + L-serine + ATP = L-seryl-tRNA(Ser) + AMP + diphosphate + H(+). The catalysed reaction is tRNA(Sec) + L-serine + ATP = L-seryl-tRNA(Sec) + AMP + diphosphate + H(+). It participates in aminoacyl-tRNA biosynthesis; selenocysteinyl-tRNA(Sec) biosynthesis; L-seryl-tRNA(Sec) from L-serine and tRNA(Sec): step 1/1. Catalyzes the attachment of serine to tRNA(Ser). Is also able to aminoacylate tRNA(Sec) with serine, to form the misacylated tRNA L-seryl-tRNA(Sec), which will be further converted into selenocysteinyl-tRNA(Sec). The protein is Serine--tRNA ligase of Staphylococcus aureus (strain USA300).